The following is a 210-amino-acid chain: Small ribosomal subunit protein uS7 (210 aa).

It belongs to the universal ribosomal protein uS7 family.

In Podocoryna carnea (Hydrozoan), this protein is Small ribosomal subunit protein uS7 (RPS5).